Reading from the N-terminus, the 231-residue chain is N-acetylmuramate alpha-1-phosphate uridylyltransferase (231 aa).

Residues 11–13 (GER) and lysine 23 each bind UTP. Asparagine 106 lines the substrate pocket. Aspartate 108 contacts Mg(2+). Residues aspartate 146 and aspartate 213 each coordinate substrate. Residue aspartate 213 coordinates Mg(2+).

This sequence belongs to the nucleotidyltransferase MurU family. As to quaternary structure, monomer. The cofactor is Mg(2+).

The enzyme catalyses N-acetyl-alpha-D-muramate 1-phosphate + UDP + H(+) = UDP-N-acetyl-alpha-D-muramate + phosphate. The protein operates within cell wall biogenesis; peptidoglycan recycling. In terms of biological role, catalyzes the formation of UDP-N-acetylmuramate (UDP-MurNAc), a crucial precursor of the bacterial peptidoglycan cell wall, from UTP and MurNAc-alpha-1P. Is likely involved in peptidoglycan recycling as part of a cell wall recycling pathway that bypasses de novo biosynthesis of the peptidoglycan precursor UDP-MurNAc. Is able to complement the fosfomycin sensitivity phenotype of a P.putida mutant lacking murU. The sequence is that of N-acetylmuramate alpha-1-phosphate uridylyltransferase from Neisseria meningitidis serogroup B (strain ATCC BAA-335 / MC58).